A 386-amino-acid polypeptide reads, in one-letter code: Synaptotagmin-5 (386 aa).

Over residues 1 to 16 (MFPEPPTPGSPAPETP) the composition is skewed to pro residues. The interval 1–21 (MFPEPPTPGSPAPETPPDSSR) is disordered. The Vesicular portion of the chain corresponds to 1 to 24 (MFPEPPTPGSPAPETPPDSSRIRQ). Residues 25 to 45 (GAVPAWVLATILLGSGLLVFS) traverse the membrane as a helical segment. The Cytoplasmic segment spans residues 46 to 386 (SCFCLYRKRC…PDRARPIPAP (341 aa)). C2 domains follow at residues 108 to 227 (QLGR…QAWR) and 239 to 372 (KLGD…AQWH). Ca(2+)-binding residues include Leu138, Asp139, Asp145, Asp197, Phe198, Asp199, Ser202, Asp205, Asp270, Asp276, Asp330, and Asp332.

The protein belongs to the synaptotagmin family. Homodimer. Interacts with both alpha- and beta-tubulin. Ca(2+) serves as cofactor. In terms of tissue distribution, expressed in kidney, adipose tissue, lung and heart, as well as at higher levels in brain.

Its subcellular location is the cytoplasmic vesicle. The protein localises to the secretory vesicle. It is found in the synaptic vesicle membrane. It localises to the recycling endosome membrane. Its function is as follows. May be involved in Ca(2+)-dependent exocytosis of secretory vesicles through Ca(2+) and phospholipid binding to the C2 domain or may serve as Ca(2+) sensors in the process of vesicular trafficking and exocytosis. Regulates the Ca(2+)-dependent secretion of norepinephrine in PC12 cells. Required for export from the endocytic recycling compartment to the cell surface. This is Synaptotagmin-5 (Syt5) from Rattus norvegicus (Rat).